The primary structure comprises 231 residues: ATP-dependent dethiobiotin synthetase BioD (231 aa).

An ATP-binding site is contributed by 12-17 (EVGKTV). Threonine 16 contacts Mg(2+). Residue lysine 37 is part of the active site. Serine 41 lines the substrate pocket. Residues aspartate 51, 112 to 115 (EGAG), and 202 to 204 (PKL) contribute to the ATP site. Mg(2+)-binding residues include aspartate 51 and glutamate 112.

It belongs to the dethiobiotin synthetase family. In terms of assembly, homodimer. The cofactor is Mg(2+).

The protein resides in the cytoplasm. The catalysed reaction is (7R,8S)-7,8-diammoniononanoate + CO2 + ATP = (4R,5S)-dethiobiotin + ADP + phosphate + 3 H(+). The protein operates within cofactor biosynthesis; biotin biosynthesis; biotin from 7,8-diaminononanoate: step 1/2. Functionally, catalyzes a mechanistically unusual reaction, the ATP-dependent insertion of CO2 between the N7 and N8 nitrogen atoms of 7,8-diaminopelargonic acid (DAPA, also called 7,8-diammoniononanoate) to form a ureido ring. The polypeptide is ATP-dependent dethiobiotin synthetase BioD (Bacillus subtilis subsp. natto).